A 302-amino-acid chain; its full sequence is Sulfotransferase 1C4 (302 aa).

55-60 (KAGTTW) contacts 3'-phosphoadenylyl sulfate. Substrate is bound at residue 113-115 (KTH). The Proton acceptor role is filled by H115. Residues R137, S145, Y200, 234-239 (TSFDVM), and 262-266 (FMRKG) each bind 3'-phosphoadenylyl sulfate.

It belongs to the sulfotransferase 1 family. As to expression, expressed in liver, kidney and jejunum.

Its subcellular location is the cytoplasm. It localises to the cytosol. The catalysed reaction is a phenol + 3'-phosphoadenylyl sulfate = an aryl sulfate + adenosine 3',5'-bisphosphate + H(+). It carries out the reaction 17beta-estradiol + 3'-phosphoadenylyl sulfate = 17beta-estradiol 3-sulfate + adenosine 3',5'-bisphosphate + H(+). The enzyme catalyses bisphenol A + 3'-phosphoadenylyl sulfate = bisphenyl A sulfate + adenosine 3',5'-bisphosphate + H(+). In terms of biological role, sulfotransferase that utilizes 3'-phospho-5'-adenylyl sulfate (PAPS) as sulfonate donor to catalyze the sulfate conjugation of phenolic compounds and estrogen (E2). Can also sulfonate estrogenic compounds, however, the dietary flavonoids (phytoestrogen) and environmental estrogens, like bisphenol A are better substrates than 17beta-estradiol (E2). This chain is Sulfotransferase 1C4 (SULT1C4), found in Macaca fascicularis (Crab-eating macaque).